Consider the following 292-residue polypeptide: Acetyl-coenzyme A carboxylase carboxyl transferase subunit beta (292 aa).

Residues 29 to 292 (LWSKCPECGQ…HGCESRVASS (264 aa)) enclose the CoA carboxyltransferase N-terminal domain. Residues C33, C36, C52, and C55 each coordinate Zn(2+). The C4-type zinc finger occupies 33-55 (CPECGQVVYRKDLLSNASVCGNC).

Belongs to the AccD/PCCB family. Acetyl-CoA carboxylase is a heterohexamer composed of biotin carboxyl carrier protein (AccB), biotin carboxylase (AccC) and two subunits each of ACCase subunit alpha (AccA) and ACCase subunit beta (AccD). The cofactor is Zn(2+).

The protein resides in the cytoplasm. The catalysed reaction is N(6)-carboxybiotinyl-L-lysyl-[protein] + acetyl-CoA = N(6)-biotinyl-L-lysyl-[protein] + malonyl-CoA. It participates in lipid metabolism; malonyl-CoA biosynthesis; malonyl-CoA from acetyl-CoA: step 1/1. Component of the acetyl coenzyme A carboxylase (ACC) complex. Biotin carboxylase (BC) catalyzes the carboxylation of biotin on its carrier protein (BCCP) and then the CO(2) group is transferred by the transcarboxylase to acetyl-CoA to form malonyl-CoA. The protein is Acetyl-coenzyme A carboxylase carboxyl transferase subunit beta of Synechococcus sp. (strain CC9311).